The following is a 65-amino-acid chain: Large ribosomal subunit protein bL35 (65 aa).

Basic residues predominate over residues M1–V16. The interval M1 to Q26 is disordered.

This sequence belongs to the bacterial ribosomal protein bL35 family.

The protein is Large ribosomal subunit protein bL35 of Azoarcus sp. (strain BH72).